We begin with the raw amino-acid sequence, 280 residues long: MLSKAHAKVNLSLDVIGKRKDGYHLLKMLMQTIDLYDLIQIKKIKKGIIIDCDREYIPKDRRNLAYKAAELFLDRYNIDSGVRIDITKNIPVAAGLAGGSTDAATVLKIMRDIFRSDISNKELKEIALDIGADVPFCIEGGTALCEGIGEKITPIKNFKNQILVLVKPNFGLSTKDVYNNLKVEKIYIHPNTTKLIQSIEEDNLKSVARNMRNVLENVTLRKYKTLNSIKSNFIELGALGSMMSGSGPSVFGLFDDMLKAQICYDNMKEKYKEVFITRTI.

Residue K8 is part of the active site. 91-101 provides a ligand contact to ATP; it reads PVAAGLAGGST. Residue D133 is part of the active site.

Belongs to the GHMP kinase family. IspE subfamily.

The catalysed reaction is 4-CDP-2-C-methyl-D-erythritol + ATP = 4-CDP-2-C-methyl-D-erythritol 2-phosphate + ADP + H(+). Its pathway is isoprenoid biosynthesis; isopentenyl diphosphate biosynthesis via DXP pathway; isopentenyl diphosphate from 1-deoxy-D-xylulose 5-phosphate: step 3/6. In terms of biological role, catalyzes the phosphorylation of the position 2 hydroxy group of 4-diphosphocytidyl-2C-methyl-D-erythritol. The sequence is that of 4-diphosphocytidyl-2-C-methyl-D-erythritol kinase from Clostridium botulinum (strain Loch Maree / Type A3).